The sequence spans 309 residues: MVDMKIWTGRVDAAEGEAAKRWHQAVQAMPENGAPGIAIIGFACDEGVRRNQGRVGAAGGPKTLRKALANLAYHPTLPLYDAGDVACADGDLAAAQQRLGERVAQVIAAGHLPLVLGGGHETAYGHWLGLSAAHPDKRIGVINFDAHFDLRQASEATSGTPFAQIAADCARHGRVFRYLCLGVAETANTQALFDTARRLGAEWRLDTDMNGWQLADIRGQLAEFLDSVDAVYLTIDLDVLPAAQMPAVSAPAGYGVDIAVVEALAGRIAKSGKLAGADLVEFNPDYDIDSHGAKAAARLAWSLSRHLRR.

Mn(2+) is bound by residues H120, D145, H147, D149, D236, and D238.

Belongs to the arginase family. Requires Mn(2+) as cofactor.

The enzyme catalyses N-formimidoyl-L-glutamate + H2O = formamide + L-glutamate. Its pathway is amino-acid degradation; L-histidine degradation into L-glutamate; L-glutamate from N-formimidoyl-L-glutamate (hydrolase route): step 1/1. In terms of biological role, catalyzes the conversion of N-formimidoyl-L-glutamate to L-glutamate and formamide. This chain is Formimidoylglutamase, found in Chromobacterium violaceum (strain ATCC 12472 / DSM 30191 / JCM 1249 / CCUG 213 / NBRC 12614 / NCIMB 9131 / NCTC 9757 / MK).